The primary structure comprises 363 residues: Dihydroorotate dehydrogenase (quinone) (363 aa).

FMN-binding positions include 62 to 66 (AGYDK) and T86. K66 lines the substrate pocket. 111-115 (NRLGF) is a substrate binding site. Residues N139 and N170 each contribute to the FMN site. N170 is a binding site for substrate. The active-site Nucleophile is the S173. N175 lines the substrate pocket. Residues K215 and S243 each coordinate FMN. 244–245 (NT) serves as a coordination point for substrate. Residues G266, G295, and 316–317 (YS) contribute to the FMN site.

This sequence belongs to the dihydroorotate dehydrogenase family. Type 2 subfamily. In terms of assembly, monomer. It depends on FMN as a cofactor.

The protein localises to the cell membrane. It catalyses the reaction (S)-dihydroorotate + a quinone = orotate + a quinol. It functions in the pathway pyrimidine metabolism; UMP biosynthesis via de novo pathway; orotate from (S)-dihydroorotate (quinone route): step 1/1. In terms of biological role, catalyzes the conversion of dihydroorotate to orotate with quinone as electron acceptor. The sequence is that of Dihydroorotate dehydrogenase (quinone) from Agrobacterium fabrum (strain C58 / ATCC 33970) (Agrobacterium tumefaciens (strain C58)).